A 225-amino-acid polypeptide reads, in one-letter code: Superantigen-like protein 11 (225 aa).

The N-terminal stretch at 1–30 (MKLKNIAKASLALGILTTGMITTTAQPVKA) is a signal peptide. Residues 94–196 (VDIFVVRENS…RITMKDGGFY (103 aa)) form a sialyl Lewis X-binding region.

The protein belongs to the staphylococcal/streptococcal toxin family. Homodimer (via its C-terminal domain). Interacts with host FCAR and SELPLG (via sialyl Lewis X).

Its subcellular location is the secreted. Functionally, secreted protein that plays a role in the inhibition of host immune system. Targets myeloid cells such as monocytes or granulocytes through binding with sialyllactosamine-containing glycoproteins. Prevents initial rolling of neutrophils toward the site of infection by interacting with host SELPLG. Disrupts neutrophil motility by induction of cell adhesion via interacting with glycans but independently of SELPLG. This Staphylococcus aureus (strain Newman) protein is Superantigen-like protein 11.